The following is a 171-amino-acid chain: Probable deoxyuridine 5'-triphosphate nucleotidohydrolase (171 aa).

This sequence belongs to the dCTP deaminase family. Archaeal dUTPase subfamily.

It carries out the reaction dUTP + H2O = dUMP + diphosphate + H(+). The protein operates within pyrimidine metabolism; dUMP biosynthesis; dUMP from dCTP (dUTP route): step 2/2. In terms of biological role, this enzyme is involved in nucleotide metabolism: it produces dUMP, the immediate precursor of thymidine nucleotides and it decreases the intracellular concentration of dUTP so that uracil cannot be incorporated into DNA. This Methanosarcina acetivorans (strain ATCC 35395 / DSM 2834 / JCM 12185 / C2A) protein is Probable deoxyuridine 5'-triphosphate nucleotidohydrolase.